The following is a 160-amino-acid chain: MTNIRIGQGYDVHQLTEGRKLILGGVEIPFEKGLLGHSDADALLHAVTDALLGAAGLGDIGSHFPDTAAEFKDADSRVLLRAAYQSVQAQGWQAVNVDTTVIAQKPKLAPHIPQMRANIAADLGIDISCVNIKGKTNEKLGYLGRMEGIESQAAVLLVRI.

Residues Asp-11 and His-13 each contribute to the a divalent metal cation site. Residues 11-13 and 37-38 each bind 4-CDP-2-C-methyl-D-erythritol 2-phosphate; these read DVH and HS. His-45 contacts a divalent metal cation. Residues 59 to 61 and Arg-145 contribute to the 4-CDP-2-C-methyl-D-erythritol 2-phosphate site; that span reads DIG.

It belongs to the IspF family. Homotrimer. It depends on a divalent metal cation as a cofactor.

It carries out the reaction 4-CDP-2-C-methyl-D-erythritol 2-phosphate = 2-C-methyl-D-erythritol 2,4-cyclic diphosphate + CMP. It functions in the pathway isoprenoid biosynthesis; isopentenyl diphosphate biosynthesis via DXP pathway; isopentenyl diphosphate from 1-deoxy-D-xylulose 5-phosphate: step 4/6. In terms of biological role, involved in the biosynthesis of isopentenyl diphosphate (IPP) and dimethylallyl diphosphate (DMAPP), two major building blocks of isoprenoid compounds. Catalyzes the conversion of 4-diphosphocytidyl-2-C-methyl-D-erythritol 2-phosphate (CDP-ME2P) to 2-C-methyl-D-erythritol 2,4-cyclodiphosphate (ME-CPP) with a corresponding release of cytidine 5-monophosphate (CMP). The polypeptide is 2-C-methyl-D-erythritol 2,4-cyclodiphosphate synthase (Neisseria meningitidis serogroup A / serotype 4A (strain DSM 15465 / Z2491)).